The primary structure comprises 697 residues: Potassium-transporting ATPase ATP-binding subunit (697 aa).

The next 4 helical transmembrane spans lie at 36–56 (VMFV…RDLI), 66–86 (LQII…EAVA), 218–238 (IALN…TATI), and 253–273 (VLVA…LSAI). Aspartate 306 (4-aspartylphosphate intermediate) is an active-site residue. ATP is bound by residues aspartate 343, glutamate 347, 376–383 (FTAQTRMS), and lysine 394. Mg(2+)-binding residues include aspartate 526 and aspartate 530. 3 helical membrane passes run 595–615 (YFAI…QSTG), 631–651 (AILS…PLSL), and 669–689 (LLVY…IIDM).

The protein belongs to the cation transport ATPase (P-type) (TC 3.A.3) family. Type IA subfamily. In terms of assembly, the system is composed of three essential subunits: KdpA, KdpB and KdpC.

It is found in the cell inner membrane. It carries out the reaction K(+)(out) + ATP + H2O = K(+)(in) + ADP + phosphate + H(+). Functionally, part of the high-affinity ATP-driven potassium transport (or Kdp) system, which catalyzes the hydrolysis of ATP coupled with the electrogenic transport of potassium into the cytoplasm. This subunit is responsible for energy coupling to the transport system and for the release of the potassium ions to the cytoplasm. The polypeptide is Potassium-transporting ATPase ATP-binding subunit (Mesorhizobium japonicum (strain LMG 29417 / CECT 9101 / MAFF 303099) (Mesorhizobium loti (strain MAFF 303099))).